Here is a 532-residue protein sequence, read N- to C-terminus: Cytochrome c oxidase subunit 1 (532 aa).

The next 3 membrane-spanning stretches (helical) occupy residues methionine 1–alanine 21, leucine 27–valine 47, and glycine 69–phenylalanine 89. Histidine 114 is a heme b binding site. Transmembrane regions (helical) follow at residues threonine 115 to valine 135, leucine 143 to threonine 163, leucine 185 to phenylalanine 205, isoleucine 212 to valine 232, glycine 263 to valine 283, leucine 296 to leucine 316, leucine 328 to leucine 348, and methionine 366 to isoleucine 386. Cu cation contacts are provided by histidine 264, histidine 314, and histidine 315. 2 residues coordinate heme b: histidine 402 and histidine 404. Helical transmembrane passes span valine 403–threonine 423, phenylalanine 442–methionine 462, and valine 496–valine 516.

Belongs to the heme-copper respiratory oxidase family. Requires Cu(2+) as cofactor. Heme b serves as cofactor.

Its subcellular location is the cell membrane. The enzyme catalyses 4 Fe(II)-[cytochrome c] + O2 + 8 H(+)(in) = 4 Fe(III)-[cytochrome c] + 2 H2O + 4 H(+)(out). It functions in the pathway energy metabolism; oxidative phosphorylation. Its function is as follows. Cytochrome c oxidase is the component of the respiratory chain that catalyzes the reduction of oxygen to water. Subunits 1-3 form the functional core of the enzyme complex. Co I is the catalytic subunit of the enzyme. Electrons originating in cytochrome c are transferred via the copper A center of subunit 2 and heme a of subunit 1 to the bimetallic center formed by heme a3 and copper B. This cytochrome c oxidase shows proton pump activity across the membrane in addition to the electron transfer. The protein is Cytochrome c oxidase subunit 1 (ctaD) of Rhodobacter capsulatus (Rhodopseudomonas capsulata).